Consider the following 113-residue polypeptide: Colicin-E1* immunity protein (113 aa).

In terms of biological role, this protein is able to protect a cell, which harbors the plasmid pKY-1 encoding colicin E1*, against colicin E1*. The protein is Colicin-E1* immunity protein (imm) of Shigella sonnei.